The sequence spans 322 residues: ATP-dependent 6-phosphofructokinase (322 aa).

ATP is bound by residues Gly12, 73–74 (RF), and 103–106 (GDGT). Position 104 (Asp104) interacts with Mg(2+). 126–128 (TID) is a substrate binding site. The Proton acceptor role is filled by Asp128. Arg155 provides a ligand contact to ADP. Residues Arg163 and 170-172 (MGR) contribute to the substrate site. ADP contacts are provided by residues 186 to 188 (GSE), Lys212, and 214 to 216 (KPS). Substrate contacts are provided by residues Glu223, Arg245, and 251 to 254 (HTQR).

It belongs to the phosphofructokinase type A (PFKA) family. ATP-dependent PFK group I subfamily. Prokaryotic clade 'B1' sub-subfamily. In terms of assembly, homotetramer. Mg(2+) serves as cofactor.

The protein resides in the cytoplasm. The catalysed reaction is beta-D-fructose 6-phosphate + ATP = beta-D-fructose 1,6-bisphosphate + ADP + H(+). It participates in carbohydrate degradation; glycolysis; D-glyceraldehyde 3-phosphate and glycerone phosphate from D-glucose: step 3/4. Its activity is regulated as follows. Allosterically activated by ADP and other diphosphonucleosides, and allosterically inhibited by phosphoenolpyruvate. Catalyzes the phosphorylation of D-fructose 6-phosphate to fructose 1,6-bisphosphate by ATP, the first committing step of glycolysis. The protein is ATP-dependent 6-phosphofructokinase of Mesomycoplasma hyopneumoniae (strain 7448) (Mycoplasma hyopneumoniae).